A 149-amino-acid chain; its full sequence is Transcriptional repressor NrdR (149 aa).

Residues 3–34 (CPFCFAVDTKVIDSRLVGEGSSVRRRRQCLVC) fold into a zinc finger. The 91-residue stretch at 49–139 (PRVVKSNDVR…VYRSFEDIKE (91 aa)) folds into the ATP-cone domain.

This sequence belongs to the NrdR family. Zn(2+) is required as a cofactor.

Negatively regulates transcription of bacterial ribonucleotide reductase nrd genes and operons by binding to NrdR-boxes. This Escherichia fergusonii (strain ATCC 35469 / DSM 13698 / CCUG 18766 / IAM 14443 / JCM 21226 / LMG 7866 / NBRC 102419 / NCTC 12128 / CDC 0568-73) protein is Transcriptional repressor NrdR.